The primary structure comprises 491 residues: Glutamate--tRNA ligase (491 aa).

Residues 10-20 (PSPTGYLHIGG) carry the 'HIGH' region motif. The short motif at 243 to 247 (KISKR) is the 'KMSKS' region element. Position 246 (lysine 246) interacts with ATP.

This sequence belongs to the class-I aminoacyl-tRNA synthetase family. Glutamate--tRNA ligase type 1 subfamily. As to quaternary structure, monomer.

Its subcellular location is the cytoplasm. The enzyme catalyses tRNA(Glu) + L-glutamate + ATP = L-glutamyl-tRNA(Glu) + AMP + diphosphate. In terms of biological role, catalyzes the attachment of glutamate to tRNA(Glu) in a two-step reaction: glutamate is first activated by ATP to form Glu-AMP and then transferred to the acceptor end of tRNA(Glu). The protein is Glutamate--tRNA ligase of Desulfotalea psychrophila (strain LSv54 / DSM 12343).